The following is a 181-amino-acid chain: Trafficking protein particle complex subunit 3-like protein (181 aa).

Cys68 carries S-palmitoyl cysteine lipidation.

The protein belongs to the TRAPP small subunits family. BET3 subfamily. As to quaternary structure, homodimer. Component of the multisubunit TRAPP (transport protein particle) complex, which includes at least TRAPPC2, TRAPPC2L, TRAPPC3, TRAPPC3L, TRAPPC4, TRAPPC5, TRAPPC8, TRAPPC9, TRAPPC10, TRAPPC11 and TRAPPC12.

It localises to the golgi apparatus. Its subcellular location is the cis-Golgi network. It is found in the endoplasmic reticulum. Functionally, may play a role in vesicular transport from endoplasmic reticulum to Golgi. This is Trafficking protein particle complex subunit 3-like protein (Trappc3l) from Mus musculus (Mouse).